A 1370-amino-acid polypeptide reads, in one-letter code: DNA-directed RNA polymerase subunit beta (1370 aa).

It belongs to the RNA polymerase beta chain family. The RNAP catalytic core consists of 2 alpha, 1 beta, 1 beta' and 1 omega subunit. When a sigma factor is associated with the core the holoenzyme is formed, which can initiate transcription.

The enzyme catalyses RNA(n) + a ribonucleoside 5'-triphosphate = RNA(n+1) + diphosphate. Its function is as follows. DNA-dependent RNA polymerase catalyzes the transcription of DNA into RNA using the four ribonucleoside triphosphates as substrates. The polypeptide is DNA-directed RNA polymerase subunit beta (Bordetella parapertussis (strain 12822 / ATCC BAA-587 / NCTC 13253)).